The chain runs to 427 residues: Enolase (427 aa).

Q163 is a (2R)-2-phosphoglycerate binding site. E205 (proton donor) is an active-site residue. D242, E283, and D310 together coordinate Mg(2+). K335, R364, S365, and K386 together coordinate (2R)-2-phosphoglycerate. K335 acts as the Proton acceptor in catalysis.

Belongs to the enolase family. Requires Mg(2+) as cofactor.

The protein resides in the cytoplasm. The protein localises to the secreted. It is found in the cell surface. It catalyses the reaction (2R)-2-phosphoglycerate = phosphoenolpyruvate + H2O. The protein operates within carbohydrate degradation; glycolysis; pyruvate from D-glyceraldehyde 3-phosphate: step 4/5. Catalyzes the reversible conversion of 2-phosphoglycerate (2-PG) into phosphoenolpyruvate (PEP). It is essential for the degradation of carbohydrates via glycolysis. This Salinispora tropica (strain ATCC BAA-916 / DSM 44818 / JCM 13857 / NBRC 105044 / CNB-440) protein is Enolase.